A 146-amino-acid polypeptide reads, in one-letter code: Hemoglobin subunit beta (146 aa).

An N-acetylvaline modification is found at V1. In terms of domain architecture, Globin spans 2-146 (HLTDAEKAAV…VATALAHKYH (145 aa)). S44 bears the Phosphoserine mark. K59 is modified (N6-acetyllysine). H63 serves as a coordination point for heme b. N6-acetyllysine is present on K82. H92 contacts heme b. Position 93 is an S-nitrosocysteine (C93). Residue K144 is modified to N6-acetyllysine.

The protein belongs to the globin family. Heterotetramer of two alpha chains and two beta chains. In terms of tissue distribution, red blood cells.

Involved in oxygen transport from the lung to the various peripheral tissues. The chain is Hemoglobin subunit beta (HBB) from Spalax ehrenbergi (Middle East blind mole rat).